The chain runs to 85 residues: Small ribosomal subunit protein uS15 (85 aa).

Belongs to the universal ribosomal protein uS15 family. As to quaternary structure, part of the 30S ribosomal subunit. Forms a bridge to the 50S subunit in the 70S ribosome, contacting the 23S rRNA.

Its function is as follows. One of the primary rRNA binding proteins, it binds directly to 16S rRNA where it helps nucleate assembly of the platform of the 30S subunit by binding and bridging several RNA helices of the 16S rRNA. Forms an intersubunit bridge (bridge B4) with the 23S rRNA of the 50S subunit in the ribosome. This Fusobacterium nucleatum subsp. nucleatum (strain ATCC 25586 / DSM 15643 / BCRC 10681 / CIP 101130 / JCM 8532 / KCTC 2640 / LMG 13131 / VPI 4355) protein is Small ribosomal subunit protein uS15.